A 177-amino-acid polypeptide reads, in one-letter code: NADH-quinone oxidoreductase subunit B (177 aa).

4 residues coordinate [4Fe-4S] cluster: Cys-36, Cys-37, Cys-101, and Cys-130.

This sequence belongs to the complex I 20 kDa subunit family. In terms of assembly, NDH-1 is composed of 14 different subunits. Subunits NuoB, C, D, E, F, and G constitute the peripheral sector of the complex. [4Fe-4S] cluster serves as cofactor.

The protein resides in the cell inner membrane. It catalyses the reaction a quinone + NADH + 5 H(+)(in) = a quinol + NAD(+) + 4 H(+)(out). Functionally, NDH-1 shuttles electrons from NADH, via FMN and iron-sulfur (Fe-S) centers, to quinones in the respiratory chain. The immediate electron acceptor for the enzyme in this species is believed to be ubiquinone. Couples the redox reaction to proton translocation (for every two electrons transferred, four hydrogen ions are translocated across the cytoplasmic membrane), and thus conserves the redox energy in a proton gradient. This Hydrogenobaculum sp. (strain Y04AAS1) protein is NADH-quinone oxidoreductase subunit B.